The following is a 1262-amino-acid chain: Tau-tubulin kinase homolog Asator (1262 aa).

The disordered stretch occupies residues 13 to 35 (NASAPDDGNQSCQPSSKQDQYLS). Residues 20 to 35 (GNQSCQPSSKQDQYLS) show a composition bias toward polar residues. The region spanning 173-436 (WKVVRKIGGG…MLIGLFERCM (264 aa)) is the Protein kinase domain. ATP contacts are provided by residues 179–187 (IGGGGFGEI) and Lys202. Asp293 functions as the Proton acceptor in the catalytic mechanism. 3 disordered regions span residues 662–724 (TVTN…TSNA), 755–792 (RSATSTNLRPSSSASQRINSGSTIGGAVGNGSNTARSS), and 984–1003 (KDSALQLNSTNDSLDKSRHR). A compositionally biased stretch (basic and acidic residues) spans 667–679 (KTSEVNRSTEEQK). Residues 755–776 (RSATSTNLRPSSSASQRINSGS) are compositionally biased toward polar residues.

It belongs to the protein kinase superfamily. CK1 Ser/Thr protein kinase family. As to quaternary structure, interacts with Mgtor. The cofactor is Mg(2+). Detected in larval brain.

It localises to the cytoplasm. The protein resides in the cytoskeleton. Its subcellular location is the spindle. The catalysed reaction is L-seryl-[protein] + ATP = O-phospho-L-seryl-[protein] + ADP + H(+). It catalyses the reaction L-threonyl-[protein] + ATP = O-phospho-L-threonyl-[protein] + ADP + H(+). Functionally, probable serine/threonine protein kinase. This is Tau-tubulin kinase homolog Asator from Drosophila melanogaster (Fruit fly).